A 495-amino-acid chain; its full sequence is Cysteine--tRNA ligase (495 aa).

Residue Cys-35 coordinates Zn(2+). Positions 37–47 (PTVYSNVHLGN) match the 'HIGH' region motif. 3 residues coordinate Zn(2+): Cys-230, His-255, and Glu-259. The short motif at 287-291 (KMSKS) is the 'KMSKS' region element. Position 290 (Lys-290) interacts with ATP.

This sequence belongs to the class-I aminoacyl-tRNA synthetase family. In terms of assembly, monomer. Zn(2+) serves as cofactor.

Its subcellular location is the cytoplasm. It carries out the reaction tRNA(Cys) + L-cysteine + ATP = L-cysteinyl-tRNA(Cys) + AMP + diphosphate. This is Cysteine--tRNA ligase from Flavobacterium psychrophilum (strain ATCC 49511 / DSM 21280 / CIP 103535 / JIP02/86).